Reading from the N-terminus, the 268-residue chain is Interleukin-2 receptor subunit alpha (268 aa).

A signal peptide spans 1-21 (MEPRLLMLGFLSLTIVPSCRA). The 58-residue stretch at 22–79 (ELCLYDPPEVPNATFKALSYKNGTILNCECKRGFRRLKELVYMRCLGNSWSSNCQCTS) folds into the Sushi 1 domain. The Extracellular portion of the chain corresponds to 22–236 (ELCLYDPPEV…ETFVLTMEYK (215 aa)). 3 disulfide bridges follow: C24/C66, C49/C75, and C51/C77. N33 and N43 each carry an N-linked (GlcNAc...) asparagine glycan. Residues 86–109 (RKQVTAQLEHQKEQQTTTDMQKPT) form a disordered region. The span at 88–109 (QVTAQLEHQKEQQTTTDMQKPT) shows a compositional bias: polar residues. N116 carries an N-linked (GlcNAc...) asparagine glycan. Residues 119 to 182 (GHCREPPPWK…WTQPQLTCVD (64 aa)) enclose the Sushi 2 domain. Intrachain disulfides connect C121-C164 and C148-C180. Residues 189-219 (FLASEESQGSRNSSPESETSCPITTTDFPQP) are disordered. The segment covering 193-211 (EESQGSRNSSPESETSCPI) has biased composition (polar residues). A helical membrane pass occupies residues 237–257 (VAVASCLFLLISILLLSGLTW). At 258–268 (QHRWRKSRRTI) the chain is on the cytoplasmic side.

Non-covalent dimer of an alpha and a beta subunit. IL2R exists in 3 different forms: a high affinity dimer, an intermediate affinity monomer (beta subunit), and a low affinity monomer (alpha subunit). The high and intermediate affinity forms also associate with a gamma subunit.

It localises to the membrane. Receptor for interleukin-2. The receptor is involved in the regulation of immune tolerance by controlling regulatory T cells (TREGs) activity. TREGs suppress the activation and expansion of autoreactive T-cells. The sequence is that of Interleukin-2 receptor subunit alpha (Il2ra) from Mus musculus (Mouse).